Consider the following 317-residue polypeptide: Acetyl-coenzyme A carboxylase carboxyl transferase subunit alpha (317 aa).

One can recognise a CoA carboxyltransferase C-terminal domain in the interval 39-293 (RLQKKSNDLT…KAVLEKQLHE (255 aa)).

Belongs to the AccA family. Acetyl-CoA carboxylase is a heterohexamer composed of biotin carboxyl carrier protein (AccB), biotin carboxylase (AccC) and two subunits each of ACCase subunit alpha (AccA) and ACCase subunit beta (AccD).

It is found in the cytoplasm. The catalysed reaction is N(6)-carboxybiotinyl-L-lysyl-[protein] + acetyl-CoA = N(6)-biotinyl-L-lysyl-[protein] + malonyl-CoA. It functions in the pathway lipid metabolism; malonyl-CoA biosynthesis; malonyl-CoA from acetyl-CoA: step 1/1. Functionally, component of the acetyl coenzyme A carboxylase (ACC) complex. First, biotin carboxylase catalyzes the carboxylation of biotin on its carrier protein (BCCP) and then the CO(2) group is transferred by the carboxyltransferase to acetyl-CoA to form malonyl-CoA. The sequence is that of Acetyl-coenzyme A carboxylase carboxyl transferase subunit alpha from Neisseria gonorrhoeae (strain NCCP11945).